Here is a 150-residue protein sequence, read N- to C-terminus: S-protein homolog 24 (150 aa).

N-linked (GlcNAc...) asparagine glycosylation is present at N122.

It belongs to the plant self-incompatibility (S1) protein family.

The protein localises to the secreted. The sequence is that of S-protein homolog 24 from Arabidopsis thaliana (Mouse-ear cress).